A 449-amino-acid polypeptide reads, in one-letter code: Putative tartrate transporter (449 aa).

The next 11 helical transmembrane spans lie at 34 to 54, 64 to 84, 99 to 119, 130 to 150, 156 to 176, 194 to 214, 259 to 279, 292 to 312, 336 to 356, 367 to 387, and 414 to 434; these read IVPFIMLLYFIAFLDRVNIGF, GFSSTVFGIGAGIFFVGYFLF, IWIARVMITWGIVSGLMAFVQ, LLGVAEAGFFPGIILYLSFWF, AAVTALFMAAAPLSTVLGSPI, WMFLIEAAPALILGVVVLFFL, VIALALVYFGTSAGLYTLGIW, IEVGFINAVPGIFAVVAMVLW, GLAFAAGATSVFMVLIALTIV, LWSMPTMFLSGPAAAAGIATI, and GGLYFVAGLLLISAILTLILA.

It belongs to the major facilitator superfamily. Phthalate permease family.

It localises to the cell membrane. Its function is as follows. Component of the tartrate utilization system and may allow entry of tartrate and tartrate dehydrogenase. The sequence is that of Putative tartrate transporter (ttuB) from Agrobacterium vitis (Rhizobium vitis).